A 149-amino-acid polypeptide reads, in one-letter code: SsrA-binding protein (149 aa).

Belongs to the SmpB family.

Its subcellular location is the cytoplasm. Its function is as follows. Required for rescue of stalled ribosomes mediated by trans-translation. Binds to transfer-messenger RNA (tmRNA), required for stable association of tmRNA with ribosomes. tmRNA and SmpB together mimic tRNA shape, replacing the anticodon stem-loop with SmpB. tmRNA is encoded by the ssrA gene; the 2 termini fold to resemble tRNA(Ala) and it encodes a 'tag peptide', a short internal open reading frame. During trans-translation Ala-aminoacylated tmRNA acts like a tRNA, entering the A-site of stalled ribosomes, displacing the stalled mRNA. The ribosome then switches to translate the ORF on the tmRNA; the nascent peptide is terminated with the 'tag peptide' encoded by the tmRNA and targeted for degradation. The ribosome is freed to recommence translation, which seems to be the essential function of trans-translation. This chain is SsrA-binding protein, found in Anaplasma marginale (strain Florida).